The sequence spans 218 residues: Protein-L-isoaspartate O-methyltransferase 1 (218 aa).

Ser69 is an active-site residue.

The protein belongs to the methyltransferase superfamily. L-isoaspartyl/D-aspartyl protein methyltransferase family.

Its subcellular location is the cytoplasm. It carries out the reaction [protein]-L-isoaspartate + S-adenosyl-L-methionine = [protein]-L-isoaspartate alpha-methyl ester + S-adenosyl-L-homocysteine. In terms of biological role, catalyzes the methyl esterification of L-isoaspartyl residues in peptides and proteins that result from spontaneous decomposition of normal L-aspartyl and L-asparaginyl residues. It plays a role in the repair and/or degradation of damaged proteins. The protein is Protein-L-isoaspartate O-methyltransferase 1 of Marinobacter nauticus (strain ATCC 700491 / DSM 11845 / VT8) (Marinobacter aquaeolei).